A 399-amino-acid chain; its full sequence is Acetate kinase (399 aa).

Mg(2+) is bound at residue Asn7. Lys14 is an ATP binding site. Substrate is bound at residue Arg90. Asp147 serves as the catalytic Proton donor/acceptor. ATP contacts are provided by residues 207 to 211 (HLGNG), 282 to 284 (DFR), and 330 to 334 (GIGEN). Residue Glu385 participates in Mg(2+) binding.

It belongs to the acetokinase family. Homodimer. Mg(2+) is required as a cofactor. Mn(2+) serves as cofactor.

Its subcellular location is the cytoplasm. It carries out the reaction acetate + ATP = acetyl phosphate + ADP. It functions in the pathway metabolic intermediate biosynthesis; acetyl-CoA biosynthesis; acetyl-CoA from acetate: step 1/2. Catalyzes the formation of acetyl phosphate from acetate and ATP. Can also catalyze the reverse reaction. The sequence is that of Acetate kinase from Caldicellulosiruptor bescii (strain ATCC BAA-1888 / DSM 6725 / KCTC 15123 / Z-1320) (Anaerocellum thermophilum).